A 412-amino-acid chain; its full sequence is Transcription factor IIIA (412 aa).

Residues 1–20 are disordered; it reads MSESDETKSISSLISSSSSS. Positions 9–20 are enriched in low complexity; the sequence is SISSLISSSSSS. 7 C2H2-type zinc fingers span residues 25–49, 55–79, 85–107, 111–136, 140–162, 169–194, and 197–219; these read YICT…LRTH, YKCT…IVSH, FHCS…EITH, FKCT…LSVH, LTCK…KLKH, YQCD…KQSH, and LKCP…MLSH. The segment at 228-252 adopts a C2H2-type 8; degenerate zinc-finger fold; the sequence is WTCDYCDVGKFAKKNELVEHYNIFH. Residues 285–316 are disordered; sequence LETEKLKVEEDEEDEEDSLDEKRSDVRSDSMS. Residues 293 to 303 are compositionally biased toward acidic residues; it reads EEDEEDEEDSL. The C2H2-type 9 zinc finger occupies 345 to 369; sequence INCPKNNCDRMFSREYDLRRHLKWH.

Its subcellular location is the nucleus. Its function is as follows. Transcription factor required for transcription of 5S rRNA by RNA polymerase III. In Candida albicans (strain SC5314 / ATCC MYA-2876) (Yeast), this protein is Transcription factor IIIA (PZF1).